A 173-amino-acid chain; its full sequence is MDVTIQHPWFKRALGPFYPSRLFDQFFGEGLFEYDLLPFLSSTISPYYRQSLFRTVLDSGISEVRSDRDKFVIFLDVKHFSPEDLTVKVLEDFVEIHGKHNERQDDHGYISREFHRRYRLPSNVDQSALSCSLSADGMLTFSGPKVQSGLDAGHSERAIPVSREEKPSSAPSS.

Methionine 1 carries the post-translational modification N-acetylmethionine. The segment at 1-63 (MDVTIQHPWF…RTVLDSGISE (63 aa)) is required for complex formation with BFSP1 and BFSP2. The residue at position 6 (glutamine 6) is a Deamidated glutamine; partial. Serine 45 carries the phosphoserine modification. Glutamine 50 bears the Deamidated glutamine; partial mark. Positions 52–162 (LFRTVLDSGI…GHSERAIPVS (111 aa)) constitute a sHSP domain. An N6-acetyllysine mark is found at lysine 70 and lysine 99. Histidine 100 serves as a coordination point for Zn(2+). Asparagine 101 bears the Deamidated asparagine; partial mark. Positions 102 and 107 each coordinate Zn(2+). Serine 122 carries the phosphoserine modification. Residue asparagine 123 is modified to Deamidated asparagine; partial. A disordered region spans residues 145-173 (KVQSGLDAGHSERAIPVSREEKPSSAPSS). Position 147 is a deamidated glutamine; partial (glutamine 147). Basic and acidic residues predominate over residues 153 to 167 (GHSERAIPVSREEKP). Histidine 154 is a binding site for Zn(2+). Serine 162 carries an O-linked (GlcNAc) serine glycan.

Belongs to the small heat shock protein (HSP20) family. As to quaternary structure, heteromer composed of three CRYAA and one CRYAB subunits. Inter-subunit bridging via zinc ions enhances stability, which is crucial as there is no protein turn over in the lens. Can also form homodimers and homotetramers (dimers of dimers) which serve as the building blocks of homooligomers. Within homooligomers, the zinc-binding motif is created from residues of 3 different molecules. His-100 and Glu-102 from one molecule are ligands of the zinc ion, and His-107 and His-154 residues from additional molecules complete the site with tetrahedral coordination geometry. Part of a complex required for lens intermediate filament formation composed of BFSP1, BFSP2 and CRYAA. In terms of processing, acetylation at Lys-70 may increase chaperone activity. Post-translationally, undergoes age-dependent proteolytical cleavage at the C-terminus.

The protein localises to the cytoplasm. It is found in the nucleus. Its function is as follows. Contributes to the transparency and refractive index of the lens. Acts as a chaperone, preventing aggregation of various proteins under a wide range of stress conditions. Required for the correct formation of lens intermediate filaments as part of a complex composed of BFSP1, BFSP2 and CRYAA. The sequence is that of Alpha-crystallin A chain (CRYAA) from Meriones unguiculatus (Mongolian jird).